Reading from the N-terminus, the 523-residue chain is UDP-glucuronosyltransferase 3A1 (523 aa).

A signal peptide spans 1 to 22; that stretch reads MVGQRVLLLVAFLLSGVLLSEA. Over 23–483 the chain is Extracellular; the sequence is AKILTISTLG…YAFQQPWHEQ (461 aa). A glycan (N-linked (GlcNAc...) asparagine) is linked at Asn-52. The chain crosses the membrane as a helical span at residues 484 to 504; it reads YLIDVFVFLLGLTLGTMWLCG. Residues 505–523 are Cytoplasmic-facing; sequence KLLGVVARWLRGARKVKKT.

This sequence belongs to the UDP-glycosyltransferase family.

It localises to the membrane. It carries out the reaction glucuronate acceptor + UDP-alpha-D-glucuronate = acceptor beta-D-glucuronoside + UDP + H(+). In terms of biological role, UDP-glucuronosyltransferases catalyze phase II biotransformation reactions in which lipophilic substrates are conjugated with glucuronic acid to increase water solubility and enhance excretion. They are of major importance in the conjugation and subsequent elimination of potentially toxic xenobiotics and endogenous compounds. The chain is UDP-glucuronosyltransferase 3A1 (UGT3A1) from Homo sapiens (Human).